A 166-amino-acid polypeptide reads, in one-letter code: CDP-archaeol synthase (166 aa).

4 consecutive transmembrane segments (helical) span residues isoleucine 39 to alanine 59, isoleucine 61 to isoleucine 81, glutamate 104 to phenylalanine 124, and isoleucine 127 to leucine 147.

It belongs to the CDP-archaeol synthase family. Mg(2+) serves as cofactor.

The protein resides in the cell membrane. It carries out the reaction 2,3-bis-O-(geranylgeranyl)-sn-glycerol 1-phosphate + CTP + H(+) = CDP-2,3-bis-O-(geranylgeranyl)-sn-glycerol + diphosphate. The protein operates within membrane lipid metabolism; glycerophospholipid metabolism. In terms of biological role, catalyzes the formation of CDP-2,3-bis-(O-geranylgeranyl)-sn-glycerol (CDP-archaeol) from 2,3-bis-(O-geranylgeranyl)-sn-glycerol 1-phosphate (DGGGP) and CTP. This reaction is the third ether-bond-formation step in the biosynthesis of archaeal membrane lipids. This is CDP-archaeol synthase from Methanospirillum hungatei JF-1 (strain ATCC 27890 / DSM 864 / NBRC 100397 / JF-1).